Consider the following 544-residue polypeptide: MAAKEVKFGRDARERLLRGVDILADAVKVTLGPKGRNVVIDKSFGAPRITKDGVSVAKEIELENKFENMGAQMLREVASKTNDIAGDGTTTATVLGQAIVQEGVKAVAASMNPMDLKRGIDAAVEAVVADLFKKAKKIQTSEEIAQVATISANGAEDIGKMIADAMEKVGNEGVITVEEAKTAETELEVVEGMQFDRGYLSPYFVTNSEKMMVDLDDPYILIHEKKLSNLQSLLPVLEAVAQSGKPLLIIAEDVEGEALATLVVNKLRGGLKIAAVKAPGFGDRRKAMLEDIAVLTSGQVISEDVGIKLENVTLEMLGRAKKVHVSKETTTIVDGAGQKSEINARVSQIKAQIEETTSDYDREKLQERLAKLAGGVAVIRVGGSTEVEVKEKKDRVDDALNATRAAVEEGIVPGGGTPLLRAAKALSIKGKNPDQEAGIGIIRRALQAPARQIAHNAGEEAAVIVGKVLENCSDTFGYNTATAQFRDLISFGIVDPVKVVRSALQNAASIASLLITTEAMVAEVPKKEAAAPAMPGGGMGGMDF.

Residues 30-33 (TLGP), Lys51, 87-91 (DGTTT), Gly415, and Asp495 contribute to the ATP site.

The protein belongs to the chaperonin (HSP60) family. Forms a cylinder of 14 subunits composed of two heptameric rings stacked back-to-back. Interacts with the co-chaperonin GroES.

It localises to the cytoplasm. It carries out the reaction ATP + H2O + a folded polypeptide = ADP + phosphate + an unfolded polypeptide.. Its function is as follows. Together with its co-chaperonin GroES, plays an essential role in assisting protein folding. The GroEL-GroES system forms a nano-cage that allows encapsulation of the non-native substrate proteins and provides a physical environment optimized to promote and accelerate protein folding. This chain is Chaperonin GroEL, found in Bartonella bacilliformis.